Reading from the N-terminus, the 312-residue chain is Lipoyl synthase (312 aa).

Basic and acidic residues predominate over residues methionine 1 to lysine 10. The disordered stretch occupies residues methionine 1–arginine 20. Residues cysteine 51, cysteine 56, cysteine 62, cysteine 77, cysteine 81, cysteine 84, and serine 290 each coordinate [4Fe-4S] cluster. Residues tryptophan 63 to phenylalanine 280 enclose the Radical SAM core domain.

Belongs to the radical SAM superfamily. Lipoyl synthase family. It depends on [4Fe-4S] cluster as a cofactor.

The protein resides in the cytoplasm. The catalysed reaction is [[Fe-S] cluster scaffold protein carrying a second [4Fe-4S](2+) cluster] + N(6)-octanoyl-L-lysyl-[protein] + 2 oxidized [2Fe-2S]-[ferredoxin] + 2 S-adenosyl-L-methionine + 4 H(+) = [[Fe-S] cluster scaffold protein] + N(6)-[(R)-dihydrolipoyl]-L-lysyl-[protein] + 4 Fe(3+) + 2 hydrogen sulfide + 2 5'-deoxyadenosine + 2 L-methionine + 2 reduced [2Fe-2S]-[ferredoxin]. The protein operates within protein modification; protein lipoylation via endogenous pathway; protein N(6)-(lipoyl)lysine from octanoyl-[acyl-carrier-protein]: step 2/2. Its function is as follows. Catalyzes the radical-mediated insertion of two sulfur atoms into the C-6 and C-8 positions of the octanoyl moiety bound to the lipoyl domains of lipoate-dependent enzymes, thereby converting the octanoylated domains into lipoylated derivatives. The protein is Lipoyl synthase of Chlamydia felis (strain Fe/C-56) (Chlamydophila felis).